We begin with the raw amino-acid sequence, 215 residues long: Protein C' (215 aa).

A disordered region spans residues 12–34; that stretch reads MPSFLKKILKLRGRRQEDESRSR. An involved in self-degradation and in host STAT1 degradation region spans residues 15 to 22; it reads FLKKILKL. The span at 25–35 shows a compositional bias: basic and acidic residues; the sequence is RRQEDESRSRM. Polar residues predominate over residues 36–66; that stretch reads LSDSSTQSYQVNQLTSEETEAGSTIPSTPSK.

The protein belongs to the respirovirus protein C family. In terms of assembly, the different isoforms interact (via C-terminus) with unphosphorylated and phosphorylated human STAT1 (via N-terminus), favoring the formation of parallel STAT1 homodimers. The different isoforms do not interact with host STAT2. C protein interacts with L protein; this interaction has an inhibitory effect on viral transcription and replication. Protein Y1 is produced not only by alternative initiation, but also by proteolytic cleavage of C'. Only alternative initiation is detected in vitro, whereas in vivo cleavage seems to be predominant.

The protein resides in the host cytoplasm. The different products prevent the establishment of cellular antiviral state by blocking the interferon-alpha/beta (IFN-alpha/beta) and IFN-gamma signaling pathways. They inhibit IFN-alpha/beta induced tyrosine phosphorylation of STAT1 and STAT2. Blocking the IFN-alpha/beta pathway requires binding to STAT1 in the cytoplasm. They inhibit IFN-gamma induced serine phosphorylation of STAT1. Block the IFN-gamma pathway by binding to and stabilizing the parallel form of the STAT1 dimer, further inducing high-molecular-weight complex formation and inhibition of transcription by IFN-gamma. May also have a role in preventing the cell to enter apoptosis. Modulate regulation of viral transcription and replication. Overexpression inhibits the viral RNA polymerase. The absence of all C', C and Y1 proteins leads to viral delayed growth. Plays an important role in virion particles release. Modulates virion shape. The protein is Protein C' (P/V/C) of Cavia cutleri (Guinea pig).